Reading from the N-terminus, the 898-residue chain is Serine/threonine-protein kinase TAO3 (898 aa).

One can recognise a Protein kinase domain in the interval 24-277 (FIDLHEIGHG…AVELLRHDFI (254 aa)). Residues 30 to 38 (IGHGSFGAV) and Lys53 contribute to the ATP site. The active-site Proton acceptor is the Asp147. Disordered stretches follow at residues 316 to 375 (TRNG…DESS) and 405 to 424 (DEAGHGDPRPEPRPTQSVQS). Ser324 carries the post-translational modification Phosphoserine; by ATM. A phosphoserine mark is found at Ser343, Ser346, and Ser349. Over residues 349–366 (SIPSTSVSTGSRSSSVNS) the composition is skewed to low complexity. Thr357 bears the Phosphothreonine mark. Ser359 is subject to Phosphoserine. The segment covering 405–416 (DEAGHGDPRPEP) has biased composition (basic and acidic residues). Phosphoserine is present on Ser442. 3 coiled-coil regions span residues 452 to 502 (EQEN…THAN), 548 to 649 (FLES…HAML), and 754 to 871 (LKTL…QERE). The segment at 565–596 (EEMNEDHSTPKKEKQERISKHKENLQHTQAEE) is disordered. An N6-acetyllysine modification is found at Lys830.

This sequence belongs to the protein kinase superfamily. STE Ser/Thr protein kinase family. STE20 subfamily. Self-associates. Interacts with ERN1 and TRAF2. Interaction with TRAF2 is facilitated under ER stress conditions, such as treatment with tunicamycin, and may promote TRAF2 phosphorylation. Interacts (via N-terminus) with STK25; the interaction promotes STK25 abundance at the level of protein expression and/or stability. Autophosphorylated. Phosphorylation at Ser-324 by ATM following DNA damage is required for activation of the p38/MAPK14 stress-activated MAPK cascade. Phosphorylated at Ser-324 and on Tyr residues during T cell activation. Phosphorylated by LRRK2.

It localises to the cytoplasm. It is found in the cell membrane. The protein localises to the membrane raft. The protein resides in the lipid droplet. The enzyme catalyses L-seryl-[protein] + ATP = O-phospho-L-seryl-[protein] + ADP + H(+). The catalysed reaction is L-threonyl-[protein] + ATP = O-phospho-L-threonyl-[protein] + ADP + H(+). Serine/threonine-protein kinase that acts as a regulator of the p38/MAPK14 stress-activated MAPK cascade and of the MAPK8/JNK cascade. In response to DNA damage, involved in the G2/M transition DNA damage checkpoint by activating the p38/MAPK14 stress-activated MAPK cascade, probably by mediating phosphorylation of upstream MAP2K3 and MAP2K6 kinases. Inhibits basal activity of the MAPK8/JNK cascade and diminishes its activation in response to epidermal growth factor (EGF). Positively regulates canonical T cell receptor (TCR) signaling by preventing early PTPN6/SHP1-mediated inactivation of LCK, ensuring sustained TCR signaling that is required for optimal activation and differentiation of T cells. Phosphorylates PTPN6/SHP1 on 'Thr-394', leading to its polyubiquitination and subsequent proteasomal degradation. Required for cell surface expression of metalloprotease ADAM10 on type 1 transitional B cells which is necessary for their NOTCH-mediated development into marginal zone B cells. Also required for the NOTCH-mediated terminal differentiation of splenic conventional type 2 dendritic cells. Positively regulates osteoblast differentiation by acting as an upstream activator of the JNK pathway. Promotes JNK signaling in hepatocytes and positively regulates hepatocyte lipid storage by inhibiting beta-oxidation and triacylglycerol secretion while enhancing lipid synthesis. Restricts age-associated inflammation by negatively regulating differentiation of macrophages and their production of pro-inflammatory cytokines. Plays a role in negatively regulating the abundance of regulatory T cells in white adipose tissue. The sequence is that of Serine/threonine-protein kinase TAO3 (Taok3) from Mus musculus (Mouse).